A 325-amino-acid polypeptide reads, in one-letter code: Plasminogen (325 aa).

Kringle domains lie at 80–146 and 159–217; these read ACVK…VPSC and LTPA…VLSV. 4 disulfide bridges follow: Cys-81/Cys-146, Cys-102/Cys-135, Cys-124/Cys-141, and Cys-188/Cys-212.

The protein belongs to the peptidase S1 family. Plasminogen subfamily.

Its subcellular location is the secreted. The enzyme catalyses Preferential cleavage: Lys-|-Xaa &gt; Arg-|-Xaa, higher selectivity than trypsin. Converts fibrin into soluble products.. Its function is as follows. Plasmin dissolves the fibrin of blood clots and acts as a proteolytic factor in a variety of other processes including embryonic development, tissue remodeling, tumor invasion, and inflammation. This chain is Plasminogen, found in Petromyzon marinus (Sea lamprey).